The chain runs to 454 residues: Inactive tetrahydroanabasine acetyltransferase pauper allele (454 aa).

Belongs to the plant acyltransferase family. In terms of assembly, monomer.

The chain is Inactive tetrahydroanabasine acetyltransferase pauper allele from Lupinus albus (White lupine).